Consider the following 547-residue polypeptide: Chaperonin GroEL (547 aa).

ATP is bound by residues 30–33 (TLGP), K51, 87–91 (DGTTT), G415, and D495. A disordered region spans residues 526–547 (KKDTPVPPMPGGGMGGMGGMDF). The span at 536–547 (GGGMGGMGGMDF) shows a compositional bias: gly residues.

The protein belongs to the chaperonin (HSP60) family. As to quaternary structure, forms a cylinder of 14 subunits composed of two heptameric rings stacked back-to-back. Interacts with the co-chaperonin GroES.

It localises to the cytoplasm. The enzyme catalyses ATP + H2O + a folded polypeptide = ADP + phosphate + an unfolded polypeptide.. Its function is as follows. Together with its co-chaperonin GroES, plays an essential role in assisting protein folding. The GroEL-GroES system forms a nano-cage that allows encapsulation of the non-native substrate proteins and provides a physical environment optimized to promote and accelerate protein folding. The polypeptide is Chaperonin GroEL (Bartonella henselae (strain ATCC 49882 / DSM 28221 / CCUG 30454 / Houston 1) (Rochalimaea henselae)).